A 346-amino-acid chain; its full sequence is Tyrosine--tRNA ligase (346 aa).

Y35 is a binding site for L-tyrosine. Residues 40–48 (PTGEMHIGH) carry the 'HIGH' region motif. Positions 162, 166, 169, and 184 each coordinate L-tyrosine.

It belongs to the class-I aminoacyl-tRNA synthetase family. TyrS type 3 subfamily. As to quaternary structure, homodimer.

Its subcellular location is the cytoplasm. The enzyme catalyses tRNA(Tyr) + L-tyrosine + ATP = L-tyrosyl-tRNA(Tyr) + AMP + diphosphate + H(+). In terms of biological role, catalyzes the attachment of tyrosine to tRNA(Tyr) in a two-step reaction: tyrosine is first activated by ATP to form Tyr-AMP and then transferred to the acceptor end of tRNA(Tyr). This Haloarcula marismortui (strain ATCC 43049 / DSM 3752 / JCM 8966 / VKM B-1809) (Halobacterium marismortui) protein is Tyrosine--tRNA ligase.